The sequence spans 576 residues: MSYPAEEEDVNYDPYSYPNDYDYHTGDPKADLAYERQYEHQQTYHVIPEVIKNFLQYFHKTISDLIDQKVYELQANRVSSESIEQKIYEIQDVYENSWNKLTDRFFKTSPWPEAEAIASLVGNDAVFLILYKELYYRHIYAKVSGGPTLDQRFESYYNYCNLFNYILNADGPAPLELPNQWLWDIIDEFIYQFQSFSQYRCKTAKKSEEEIEFLRNNPKIWNVHSVLNVLHSLVDKSNINRQLEVYTSGGDPESVAGEYGRHSLYKMLGYFSLVGLLRLHSLLGDYYQAIKVLENIELNKKSMYSRVPECQITTYYYVGFAYLMMRRYQDAIRVFANILLYIQRTRNMFQRTTYKYEMINKQNEQMHGLLAIALTMYPMRIDESIHTQLREKYGDKMLRMQKGDLQVFEELFSFACPKFLSPVVPNYENVHPNYHKEPFQQQLKVFAEEVQQQAQLSTIRSFLKLYTTMPVAKLAGFLDMSEQEFRIQLLVFKHKMKNLVWTSGISALDGEFQSASEVDFYIDKDMIHIADTKVARRYGDFFIRQIHKFEELNRTLKKMPLNTGASISSSSTSRAT.

Residues 330–536 (DAIRVFANIL…IHIADTKVAR (207 aa)) form the PCI domain.

Belongs to the eIF-3 subunit L family. As to quaternary structure, component of the eukaryotic translation initiation factor 3 (eIF-3) complex, which is composed of 13 subunits: eif3a, eif3b, eif3c, eif3d, eif3e, eif3f, eif3g, eif3h, eif3i, eif3j, eif3k, eif3l and eif3m.

It localises to the cytoplasm. Its function is as follows. Component of the eukaryotic translation initiation factor 3 (eIF-3) complex, which is involved in protein synthesis of a specialized repertoire of mRNAs and, together with other initiation factors, stimulates binding of mRNA and methionyl-tRNAi to the 40S ribosome. The eIF-3 complex specifically targets and initiates translation of a subset of mRNAs involved in cell proliferation. The chain is Eukaryotic translation initiation factor 3 subunit L (eif3l) from Danio rerio (Zebrafish).